The primary structure comprises 509 residues: MSEILKSPIQSPLLRGFVTSRRCDASEIEDLGSNVTKGLRVAGGRRVLRSHFFSYCLTYPAVNVAATTETGSGDGATEKCVYLCGNSLGLQPKRTQTRVNQYLSTWGTQGVQGHFKPLEESPLPTWLDADDRAAQLIAPIVGASKAEVAVMQTLTANLHLLMSAFYKPDINGKHKIILESKAFPSDHFAVETQLRHHNLDPATSMITLTSPSSPEDNILTTAEILSAITTHAATTALILLPGIQYYTGQLLDIPTITAHARTHSVFLIWDLAHAVGNAPLHLHDWGVDAAAWCSYKYLNGGPGCIGGLFVHERNSAVPPPVGELEVQQKEGEWEREGYANRLAGWWGNDKRTRFAMVNRFRPVPGAAGFQLSNPSILDITSLTASLEVFAEAGGVGALRGKSLRLTAFLEELLVGEGSSIVGVEERALFRVITPSDPGQRGAQLSLMLRGGLLEAVMRELEKRAVIVDERKPDVIRVAPAPLYNSFEDCVRFVVAFGEALAVARKEVAV.

Residues leucine 154, threonine 155, 183-186 (FPSD), aspartate 270, histidine 273, and tyrosine 295 contribute to the pyridoxal 5'-phosphate site. Lysine 296 is subject to N6-(pyridoxal phosphate)lysine. The pyridoxal 5'-phosphate site is built by tryptophan 345 and asparagine 373.

Belongs to the kynureninase family. As to quaternary structure, homodimer. Pyridoxal 5'-phosphate is required as a cofactor.

Its subcellular location is the cytoplasm. It catalyses the reaction L-kynurenine + H2O = anthranilate + L-alanine + H(+). The enzyme catalyses 3-hydroxy-L-kynurenine + H2O = 3-hydroxyanthranilate + L-alanine + H(+). It participates in amino-acid degradation; L-kynurenine degradation; L-alanine and anthranilate from L-kynurenine: step 1/1. The protein operates within cofactor biosynthesis; NAD(+) biosynthesis; quinolinate from L-kynurenine: step 2/3. In terms of biological role, catalyzes the cleavage of L-kynurenine (L-Kyn) and L-3-hydroxykynurenine (L-3OHKyn) into anthranilic acid (AA) and 3-hydroxyanthranilic acid (3-OHAA), respectively. The chain is Kynureninase 1 from Chaetomium globosum (strain ATCC 6205 / CBS 148.51 / DSM 1962 / NBRC 6347 / NRRL 1970) (Soil fungus).